Reading from the N-terminus, the 359-residue chain is Cytoplasmic tRNA 2-thiolation protein 1 (359 aa).

Belongs to the TtcA family. CTU1/NCS6/ATPBD3 subfamily. Interacts with NCS2 and URM1. May act by forming a heterodimer with NCS2. Component of a large molecular weight complex of more than 250 kDa.

It is found in the cytoplasm. It localises to the mitochondrion. It participates in tRNA modification; 5-methoxycarbonylmethyl-2-thiouridine-tRNA biosynthesis. In terms of biological role, plays a central role in 2-thiolation of mcm(5)S(2)U at tRNA wobble positions of tRNA(Lys), tRNA(Glu) and tRNA(Gln). Directly binds tRNAs and probably acts by catalyzing adenylation of tRNAs, an intermediate required for 2-thiolation. It is unclear whether it acts as a sulfurtransferase that transfers sulfur from thiocarboxylated URM1 onto the uridine of tRNAs at wobble position. Prior mcm(5) tRNA modification by the elongator complex is required for 2-thiolation. May also be involved in protein urmylation. May also be involved in protein urmylation and in invasive and pseudohyphal growth. This Saccharomyces cerevisiae (strain ATCC 204508 / S288c) (Baker's yeast) protein is Cytoplasmic tRNA 2-thiolation protein 1.